Reading from the N-terminus, the 228-residue chain is 2,3-bisphosphoglycerate-dependent phosphoglycerate mutase (228 aa).

Substrate contacts are provided by residues 8–15, 21–22, Arg-60, 87–90, Lys-98, 114–115, and 183–184; these read RHGQSEWN, TG, ERHY, RR, and GN. The active-site Tele-phosphohistidine intermediate is His-9. The Proton donor/acceptor role is filled by Glu-87.

This sequence belongs to the phosphoglycerate mutase family. BPG-dependent PGAM subfamily.

The catalysed reaction is (2R)-2-phosphoglycerate = (2R)-3-phosphoglycerate. The protein operates within carbohydrate degradation; glycolysis; pyruvate from D-glyceraldehyde 3-phosphate: step 3/5. Its function is as follows. Catalyzes the interconversion of 2-phosphoglycerate and 3-phosphoglycerate. In Staphylococcus haemolyticus (strain JCSC1435), this protein is 2,3-bisphosphoglycerate-dependent phosphoglycerate mutase.